We begin with the raw amino-acid sequence, 660 residues long: Phosphatidylinositol-3-phosphate phosphatase MTMR7 (660 aa).

The Myotubularin phosphatase domain maps to 126–504; sequence GWVLIDLSEE…FMYKFWSGMY (379 aa). Residues Asn-250, Asn-275, and Ile-276 each coordinate a 1,2-diacyl-sn-glycero-3-phospho-(1D-myo-inositol-3-phosphate). The active-site Phosphocysteine intermediate is the Cys-338. 7 residues coordinate a 1,2-diacyl-sn-glycero-3-phospho-(1D-myo-inositol-3-phosphate): Ser-339, Asp-340, Gly-341, Trp-342, Asp-343, Arg-344, and Arg-384. Residues 514–558 are a coiled coil; the sequence is RQSVTDYLMAVKEETQQLEEELEALEERLEKIQKVQLNCTKVKSK. The segment at 554 to 660 is disordered; the sequence is KVKSKQSEPS…DSDEAVFLTA (107 aa). The span at 566–596 shows a compositional bias: polar residues; sequence SGFSTSDNSIANTPQDYSGNMKSFPSRSPSQ. Thr-578 is subject to Phosphothreonine. Basic and acidic residues predominate over residues 641–653; that stretch reads APSEDSGKDRDSD.

Belongs to the protein-tyrosine phosphatase family. Non-receptor class myotubularin subfamily. Heterodimer (via C-terminus) with MTMR9 (via coiled coil domain); the interaction enhances MTMR7 catalytic activity. Does not homodimerize. Interacts with RAB1B (in GDP-bound form).

The protein resides in the cytoplasm. Its subcellular location is the endomembrane system. The catalysed reaction is a 1,2-diacyl-sn-glycero-3-phospho-(1D-myo-inositol-3-phosphate) + H2O = a 1,2-diacyl-sn-glycero-3-phospho-(1D-myo-inositol) + phosphate. The enzyme catalyses 1D-myo-inositol 1,3-bisphosphate + H2O = 1D-myo-inositol 1-phosphate + phosphate. Its activity is regulated as follows. Interaction with MTMR9 increases phosphatase activity. Its function is as follows. Lipid phosphatase that specifically dephosphorylates the D-3 position of phosphatidylinositol 3-phosphate (PtdIns(3)P) and inositol 1,3-bisphosphate (Ins(1,3)P2). The sequence is that of Phosphatidylinositol-3-phosphate phosphatase MTMR7 from Pongo abelii (Sumatran orangutan).